The chain runs to 775 residues: Rab3 GTPase-activating protein catalytic subunit (775 aa).

5 positions are modified to phosphoserine: Ser173, Ser330, Ser373, Ser375, and Ser384. Residues 324-351 (DEGKKTSPSDSMTKAYPADAGKAGGQLG) are disordered. The interval 386–414 (AEDLRGNGQESTKKGGPKDMAPLKPEGRL) is disordered. Ser458 is modified (phosphoserine).

It belongs to the Rab3-GAP catalytic subunit family. In terms of assembly, the Rab3 GTPase-activating complex is a heterodimer composed of Rab3gap1 and Rab3gap2. The Rab3 GTPase-activating complex interacts with DMXL2. Interacts with LMAN1.

It is found in the cytoplasm. Its subcellular location is the endoplasmic reticulum. It localises to the golgi apparatus. The protein localises to the cis-Golgi network. Its function is as follows. Catalytic subunit of the Rab3 GTPase-activating (Rab3GAP) complex composed of RAB3GAP1 and RAB3GAP2, which has GTPase-activating protein (GAP) activity towards various Rab3 subfamily members (RAB3A, RAB3B, RAB3C and RAB3D), RAB5A and RAB43, and guanine nucleotide exchange factor (GEF) activity towards RAB18. As part of the Rab3GAP complex, acts as a GAP for Rab3 proteins by converting active RAB3-GTP to the inactive form RAB3-GDP. Rab3 proteins are involved in regulated exocytosis of neurotransmitters and hormones. The Rab3GAP complex, acts as a GEF for RAB18 by promoting the conversion of inactive RAB18-GDP to the active form RAB18-GTP. Recruits and stabilizes RAB18 at the cis-Golgi membrane where RAB18 is most likely activated. Also involved in RAB18 recruitment at the endoplasmic reticulum (ER) membrane where it maintains proper ER structure. Required for normal eye and brain development. May participate in neurodevelopmental processes such as proliferation, migration and differentiation before synapse formation, and non-synaptic vesicular release of neurotransmitters. In Rattus norvegicus (Rat), this protein is Rab3 GTPase-activating protein catalytic subunit.